The primary structure comprises 375 residues: Alcohol dehydrogenase 1 (375 aa).

Residue Ser2 is modified to N-acetylserine. Residues Cys47, His68, Cys98, Cys101, Cys104, Cys112, and Cys175 each coordinate Zn(2+). Residues 200–205, Asp224, and Lys229 each bind NAD(+); that span reads GLGGVG. Lys234 carries the post-translational modification N6-succinyllysine. Residue 293-295 coordinates NAD(+); that stretch reads VGV. At Lys340 the chain carries N6-succinyllysine. Arg370 contacts NAD(+).

It belongs to the zinc-containing alcohol dehydrogenase family. Class-I subfamily. Zn(2+) is required as a cofactor.

Its subcellular location is the cytoplasm. The enzyme catalyses a primary alcohol + NAD(+) = an aldehyde + NADH + H(+). It carries out the reaction a secondary alcohol + NAD(+) = a ketone + NADH + H(+). This chain is Alcohol dehydrogenase 1 (ADH1), found in Peromyscus maniculatus (North American deer mouse).